The chain runs to 23 residues: Benzaldehyde dehydrogenase [NAD(+)] I (23 aa).

Belongs to the aldehyde dehydrogenase family. In terms of assembly, homotetramer.

The enzyme catalyses benzaldehyde + NAD(+) + H2O = benzoate + NADH + 2 H(+). This Acinetobacter guillouiae (Acinetobacter genomosp. 11) protein is Benzaldehyde dehydrogenase [NAD(+)] I.